Consider the following 252-residue polypeptide: 2-succinyl-6-hydroxy-2,4-cyclohexadiene-1-carboxylate synthase (252 aa).

Belongs to the AB hydrolase superfamily. MenH family. Monomer.

The catalysed reaction is 5-enolpyruvoyl-6-hydroxy-2-succinyl-cyclohex-3-ene-1-carboxylate = (1R,6R)-6-hydroxy-2-succinyl-cyclohexa-2,4-diene-1-carboxylate + pyruvate. It functions in the pathway quinol/quinone metabolism; 1,4-dihydroxy-2-naphthoate biosynthesis; 1,4-dihydroxy-2-naphthoate from chorismate: step 3/7. The protein operates within quinol/quinone metabolism; menaquinone biosynthesis. Functionally, catalyzes a proton abstraction reaction that results in 2,5-elimination of pyruvate from 2-succinyl-5-enolpyruvyl-6-hydroxy-3-cyclohexene-1-carboxylate (SEPHCHC) and the formation of 2-succinyl-6-hydroxy-2,4-cyclohexadiene-1-carboxylate (SHCHC). The polypeptide is 2-succinyl-6-hydroxy-2,4-cyclohexadiene-1-carboxylate synthase (Salmonella typhi).